An 88-amino-acid chain; its full sequence is Small ribosomal subunit protein bS20 (88 aa).

Positions 1-17 are enriched in basic and acidic residues; the sequence is MANIKSNEKRLRQDIKR. Residues 1-25 form a disordered region; the sequence is MANIKSNEKRLRQDIKRNLNNKGQK.

It belongs to the bacterial ribosomal protein bS20 family.

In terms of biological role, binds directly to 16S ribosomal RNA. The chain is Small ribosomal subunit protein bS20 from Mycoplasma genitalium (strain ATCC 33530 / DSM 19775 / NCTC 10195 / G37) (Mycoplasmoides genitalium).